The primary structure comprises 249 residues: tRNA pseudouridine synthase A (249 aa).

The active-site Nucleophile is the Asp-53. Tyr-111 lines the substrate pocket.

This sequence belongs to the tRNA pseudouridine synthase TruA family. As to quaternary structure, homodimer.

It catalyses the reaction uridine(38/39/40) in tRNA = pseudouridine(38/39/40) in tRNA. Formation of pseudouridine at positions 38, 39 and 40 in the anticodon stem and loop of transfer RNAs. This is tRNA pseudouridine synthase A from Streptococcus pneumoniae serotype 19F (strain G54).